The sequence spans 212 residues: Thymidylate kinase (212 aa).

10 to 17 contacts ATP; sequence GLEGAGKT.

It belongs to the thymidylate kinase family.

The enzyme catalyses dTMP + ATP = dTDP + ADP. Functionally, phosphorylation of dTMP to form dTDP in both de novo and salvage pathways of dTTP synthesis. This chain is Thymidylate kinase, found in Yersinia pseudotuberculosis serotype O:1b (strain IP 31758).